The sequence spans 303 residues: Pseudouridine-5'-phosphate glycosidase (303 aa).

The Proton donor role is filled by E25. Substrate contacts are provided by K87 and V107. A Mn(2+)-binding site is contributed by D139. A substrate-binding site is contributed by 141-143; it reads SAD. K160 (nucleophile) is an active-site residue.

The protein belongs to the pseudouridine-5'-phosphate glycosidase family. As to quaternary structure, homotrimer. Mn(2+) is required as a cofactor.

It carries out the reaction D-ribose 5-phosphate + uracil = psi-UMP + H2O. Catalyzes the reversible cleavage of pseudouridine 5'-phosphate (PsiMP) to ribose 5-phosphate and uracil. Functions biologically in the cleavage direction, as part of a pseudouridine degradation pathway. The polypeptide is Pseudouridine-5'-phosphate glycosidase (Hahella chejuensis (strain KCTC 2396)).